We begin with the raw amino-acid sequence, 210 residues long: Dephospho-CoA kinase (210 aa).

The DPCK domain maps to 4-201 (IVALTGGICS…NFYIYLSKQN (198 aa)). Residue 12–17 (CSGKTT) participates in ATP binding.

It belongs to the CoaE family.

Its subcellular location is the cytoplasm. It catalyses the reaction 3'-dephospho-CoA + ATP = ADP + CoA + H(+). The protein operates within cofactor biosynthesis; coenzyme A biosynthesis; CoA from (R)-pantothenate: step 5/5. Functionally, catalyzes the phosphorylation of the 3'-hydroxyl group of dephosphocoenzyme A to form coenzyme A. In Buchnera aphidicola subsp. Schizaphis graminum (strain Sg), this protein is Dephospho-CoA kinase.